Reading from the N-terminus, the 138-residue chain is Large ribosomal subunit protein bL19 (138 aa).

It belongs to the bacterial ribosomal protein bL19 family.

In terms of biological role, this protein is located at the 30S-50S ribosomal subunit interface and may play a role in the structure and function of the aminoacyl-tRNA binding site. This is Large ribosomal subunit protein bL19 from Rickettsia akari (strain Hartford).